The chain runs to 94 residues: Neutrophil defensin 1 (94 aa).

The signal sequence occupies residues 1–19 (MRTLAILAAILLVALQAQA). Residues 20–38 (EPLQARADEVAAAPEQIAA) constitute a propeptide that is removed on maturation. Intrachain disulfides connect C66/C94, C68/C83, and C73/C93. At R78 the chain carries ADP-ribosylarginine; by ART1. Position 85 is a phosphotyrosine (Y85). R88 is modified (ADP-ribosylarginine; by ART1).

This sequence belongs to the alpha-defensin family. As to quaternary structure, tetramer. Dimer. Interacts with RETN. (Microbial infection) Interacts with HIV-1 surface protein gp120. In terms of assembly, (Microbial infection) Interacts with herpes virus 1 (HHV1) envelope glycoprotein B; this interaction inhibits viral infection. In terms of processing, ADP-ribosylation drastically reduces cytotoxic and antibacterial activities, and enhances IL8 production. Phosphorylation at Tyr-85 has been found in some cancer cell lines, and interferes with ADP-ribosylation.

It localises to the secreted. Its function is as follows. Effector molecule of the innate immune system that acts via antibiotic-like properties against a broad array of infectious agents including bacteria, fungi, and viruses or by promoting the activation and maturation of some APCs. Interacts with the essential precursor of cell wall synthesis lipid II to inhibit bacterial cell wall synthesis. Inhibits adenovirus infection via inhibition of viral disassembly at the vertex region, thereby restricting the release of internal capsid protein pVI, which is required for endosomal membrane penetration during cell entry. In addition, interaction with adenovirus capsid leads to the redirection of viral particles to TLR4 thereby promoting a NLRP3-mediated inflammasome response and interleukin 1-beta (IL-1beta) release. Induces the production of proinflammatory cytokines including type I interferon (IFN) in plasmacytoid dendritic cells (pDCs) by triggering the degradation of NFKBIA and nuclear translocation of IRF1, both of which are required for activation of pDCs. The sequence is that of Neutrophil defensin 1 (DEFA1) from Homo sapiens (Human).